A 430-amino-acid chain; its full sequence is Histidine--tRNA ligase (430 aa).

This sequence belongs to the class-II aminoacyl-tRNA synthetase family. Homodimer.

The protein resides in the cytoplasm. It carries out the reaction tRNA(His) + L-histidine + ATP = L-histidyl-tRNA(His) + AMP + diphosphate + H(+). This is Histidine--tRNA ligase from Chlorobium limicola (strain DSM 245 / NBRC 103803 / 6330).